Here is a 350-residue protein sequence, read N- to C-terminus: Ookinete surface protein PIMMS43 (350 aa).

Positions 1-24 (MIKLCTFLSLFLIFFFLNLNAING) are cleaved as a signal peptide. A helical transmembrane segment spans residues 330–350 (NSIASKLMSVFVFIAVIIYIL).

In terms of assembly, forms multimers, perhaps with an unknown protein(s).

It is found in the membrane. Its function is as follows. Involved in ookinete evasion of the mosquito complement-like response, oocyst maturation, sporozoite development and infectivity. The polypeptide is Ookinete surface protein PIMMS43 (Plasmodium berghei (strain Anka)).